The primary structure comprises 79 residues: CDC42 small effector protein 1 (79 aa).

2 S-palmitoyl cysteine lipidation sites follow: Cys10 and Cys11. The region spanning 30–43 (IGEPMNFVHLTHIG) is the CRIB domain. The interval 48–79 (GAGDGLAMTGAVQEQMRSKGNRDRPWSNSRAL) is disordered. Basic and acidic residues predominate over residues 63-72 (MRSKGNRDRP).

It belongs to the CDC42SE/SPEC family. As to quaternary structure, interacts with CDC42 (in GTP-bound form). Interacts weakly with RAC1 and not at all with RHOA.

The protein localises to the cytoplasm. Its subcellular location is the cytoskeleton. The protein resides in the cell membrane. Functionally, probably involved in the organization of the actin cytoskeleton by acting downstream of CDC42, inducing actin filament assembly. Alters CDC42-induced cell shape changes. In activated T-cells, may play a role in CDC42-mediated F-actin accumulation at the immunological synapse. May play a role in early contractile events in phagocytosis in macrophages. The polypeptide is CDC42 small effector protein 1 (Cdc42se1) (Rattus norvegicus (Rat)).